The chain runs to 508 residues: U4/U6 small nuclear ribonucleoprotein Prp31 (508 aa).

The disordered stretch occupies residues 1–45 (MSLADELLADLEEAGEEDGLYPGGEEGESDGEPGERQVDGGLEDI). Over residues 7 to 32 (LLADLEEAGEEDGLYPGGEEGESDGE) the composition is skewed to acidic residues. Coiled-coil stretches lie at residues 96–131 (EADP…KYSK) and 192–226 (DDEL…MSFI). A Nop domain is found at 226–344 (IAPNLSIIVG…IERKFDKWQE (119 aa)). Disordered regions lie at residues 345–368 (PPPV…RGGR) and 442–461 (QSMT…GTSS). The Nuclear localization signal (NLS) signature appears at 362-375 (RKKRGGRRYRKMKE).

It belongs to the PRP31 family. Identified in the spliceosome B complex. Component of the U4/U6-U5 tri-snRNP complex. Component of some MLL1/MLL complex.

The protein resides in the nucleus. The protein localises to the nucleus speckle. It is found in the cajal body. In terms of biological role, involved in pre-mRNA splicing as component of the spliceosome. Required for the assembly of the U4/U5/U6 tri-snRNP complex, one of the building blocks of the spliceosome. The chain is U4/U6 small nuclear ribonucleoprotein Prp31 (prpf31) from Danio rerio (Zebrafish).